A 311-amino-acid chain; its full sequence is Ribosomal RNA small subunit methyltransferase H (311 aa).

S-adenosyl-L-methionine-binding positions include 34-36 (GGY), Asp-51, Phe-75, Asp-93, and Gln-100.

The protein belongs to the methyltransferase superfamily. RsmH family.

The protein resides in the cytoplasm. It catalyses the reaction cytidine(1402) in 16S rRNA + S-adenosyl-L-methionine = N(4)-methylcytidine(1402) in 16S rRNA + S-adenosyl-L-homocysteine + H(+). Functionally, specifically methylates the N4 position of cytidine in position 1402 (C1402) of 16S rRNA. This chain is Ribosomal RNA small subunit methyltransferase H, found in Caulobacter vibrioides (strain ATCC 19089 / CIP 103742 / CB 15) (Caulobacter crescentus).